A 135-amino-acid polypeptide reads, in one-letter code: Large ribosomal subunit protein bL17 (135 aa).

This sequence belongs to the bacterial ribosomal protein bL17 family. Part of the 50S ribosomal subunit. Contacts protein L32.

The protein is Large ribosomal subunit protein bL17 of Listeria monocytogenes serotype 4b (strain CLIP80459).